Consider the following 129-residue polypeptide: Small ribosomal subunit protein uS11 (129 aa).

The protein belongs to the universal ribosomal protein uS11 family. As to quaternary structure, part of the 30S ribosomal subunit. Interacts with proteins S7 and S18. Binds to IF-3.

In terms of biological role, located on the platform of the 30S subunit, it bridges several disparate RNA helices of the 16S rRNA. Forms part of the Shine-Dalgarno cleft in the 70S ribosome. This Lacticaseibacillus casei (strain BL23) (Lactobacillus casei) protein is Small ribosomal subunit protein uS11.